A 315-amino-acid polypeptide reads, in one-letter code: Putative steroid dehydrogenase 3 (315 aa).

47 to 76 (ASWAVITGGTDGIGKSFSFELAKRGFNIYI) contributes to the NADP(+) binding site. Tyr202 is an active-site residue.

The protein belongs to the short-chain dehydrogenases/reductases (SDR) family. 17-beta-HSD 3 subfamily.

The polypeptide is Putative steroid dehydrogenase 3 (stdh-3) (Caenorhabditis elegans).